Here is a 393-residue protein sequence, read N- to C-terminus: L-rhamnonate dehydratase (393 aa).

His-22 and Arg-48 together coordinate substrate. Positions 214, 241, and 269 each coordinate Mg(2+). Residue His-319 is the Proton acceptor of the active site. A substrate-binding site is contributed by Glu-339.

Belongs to the mandelate racemase/muconate lactonizing enzyme family. RhamD subfamily. As to quaternary structure, homooctamer; tetramer of dimers. Requires Mg(2+) as cofactor.

It carries out the reaction L-rhamnonate = 2-dehydro-3-deoxy-L-rhamnonate + H2O. Its function is as follows. Catalyzes the dehydration of L-rhamnonate to 2-keto-3-deoxy-L-rhamnonate (KDR). The polypeptide is L-rhamnonate dehydratase (Azorhizobium caulinodans (strain ATCC 43989 / DSM 5975 / JCM 20966 / LMG 6465 / NBRC 14845 / NCIMB 13405 / ORS 571)).